The sequence spans 426 residues: Glutamate-1-semialdehyde 2,1-aminomutase (426 aa).

At Lys-266 the chain carries N6-(pyridoxal phosphate)lysine.

Belongs to the class-III pyridoxal-phosphate-dependent aminotransferase family. HemL subfamily. Requires pyridoxal 5'-phosphate as cofactor.

The protein resides in the cytoplasm. It catalyses the reaction (S)-4-amino-5-oxopentanoate = 5-aminolevulinate. It functions in the pathway porphyrin-containing compound metabolism; protoporphyrin-IX biosynthesis; 5-aminolevulinate from L-glutamyl-tRNA(Glu): step 2/2. The chain is Glutamate-1-semialdehyde 2,1-aminomutase (hemL) from Methanocaldococcus jannaschii (strain ATCC 43067 / DSM 2661 / JAL-1 / JCM 10045 / NBRC 100440) (Methanococcus jannaschii).